Here is a 94-residue protein sequence, read N- to C-terminus: Co-chaperonin GroES (94 aa).

It belongs to the GroES chaperonin family. In terms of assembly, heptamer of 7 subunits arranged in a ring. Interacts with the chaperonin GroEL.

The protein resides in the cytoplasm. Its function is as follows. Together with the chaperonin GroEL, plays an essential role in assisting protein folding. The GroEL-GroES system forms a nano-cage that allows encapsulation of the non-native substrate proteins and provides a physical environment optimized to promote and accelerate protein folding. GroES binds to the apical surface of the GroEL ring, thereby capping the opening of the GroEL channel. The chain is Co-chaperonin GroES from Halothermothrix orenii (strain H 168 / OCM 544 / DSM 9562).